A 292-amino-acid polypeptide reads, in one-letter code: uncharacterized protein (292 aa).

This is an uncharacterized protein from Aquifex aeolicus (strain VF5).